The following is a 118-amino-acid chain: Small ribosomal subunit protein uS13 (118 aa).

Residues 94–118 (GLPVRGQRTKTNARTRKGPRKPIKK) are disordered.

The protein belongs to the universal ribosomal protein uS13 family. In terms of assembly, part of the 30S ribosomal subunit. Forms a loose heterodimer with protein S19. Forms two bridges to the 50S subunit in the 70S ribosome.

Located at the top of the head of the 30S subunit, it contacts several helices of the 16S rRNA. In the 70S ribosome it contacts the 23S rRNA (bridge B1a) and protein L5 of the 50S subunit (bridge B1b), connecting the 2 subunits; these bridges are implicated in subunit movement. Contacts the tRNAs in the A and P-sites. The polypeptide is Small ribosomal subunit protein uS13 (Shigella dysenteriae serotype 1 (strain Sd197)).